Here is a 190-residue protein sequence, read N- to C-terminus: Probable GTP-binding protein EngB (190 aa).

In terms of domain architecture, EngB-type G spans 22-190 (VKREVAFAGR…LNELLKILIP (169 aa)). GTP-binding positions include 30-37 (GRSNVGKS), 56-60 (GKTRS), 74-77 (DLPG), 141-144 (TKTD), and 173-175 (FSA). Residues Ser37 and Thr58 each contribute to the Mg(2+) site.

The protein belongs to the TRAFAC class TrmE-Era-EngA-EngB-Septin-like GTPase superfamily. EngB GTPase family. The cofactor is Mg(2+).

Its function is as follows. Necessary for normal cell division and for the maintenance of normal septation. This is Probable GTP-binding protein EngB from Kosmotoga olearia (strain ATCC BAA-1733 / DSM 21960 / TBF 19.5.1).